A 417-amino-acid polypeptide reads, in one-letter code: Cobalamin binding intrinsic factor (417 aa).

A signal peptide spans 1 to 22 (MAWFSLHLLHLLWAAAGTSTWA). Disulfide bonds link Cys26–Cys246, Cys103–Cys288, and Cys143–Cys182. Asn100 carries N-linked (GlcNAc...) asparagine glycosylation. Asp171 provides a ligand contact to cob(II)alamin. Residue Ser191 is modified to Phosphoserine. Asn209 carries an N-linked (GlcNAc...) asparagine glycan. Cob(II)alamin is bound by residues Asp222 and Gln270. N-linked (GlcNAc...) asparagine glycans are attached at residues Asn311 and Asn330. Residues 365–370 (SWGLVV) and 386–395 (WQFLSGKTPL) contribute to the cob(II)alamin site. The N-linked (GlcNAc...) asparagine glycan is linked to Asn413.

The protein belongs to the eukaryotic cobalamin transport proteins family. In terms of assembly, interacts with CUBN (via CUB domains).

The protein resides in the secreted. In terms of biological role, promotes absorption of the essential vitamin cobalamin (Cbl) in the ileum. After interaction with CUBN, the CBLIF-cobalamin complex is internalized via receptor-mediated endocytosis. This is Cobalamin binding intrinsic factor (CBLIF) from Canis lupus familiaris (Dog).